Consider the following 227-residue polypeptide: Ashwin (227 aa).

The segment covering 71–84 (LPRSRWGKRMEKSR) has biased composition (basic and acidic residues). The tract at residues 71–227 (LPRSRWGKRM…KKKIQHITWP (157 aa)) is disordered. Over residues 88-98 (SSSSTHSSSTD) the composition is skewed to low complexity. Polar residues predominate over residues 153 to 173 (GASTNCSSSNFSNRTPVSSSG). The span at 178 to 191 (SPSNHSNSSVHSNN) shows a compositional bias: low complexity. Basic and acidic residues predominate over residues 204–219 (GEPDTAKDIKSPETKK).

This sequence belongs to the ashwin family.

The protein resides in the nucleus. The polypeptide is Ashwin (Danio rerio (Zebrafish)).